The chain runs to 396 residues: Elongation factor Tu (396 aa).

The tr-type G domain maps to 10 to 205 (KPHVNIGTIG…AVDESIPDPV (196 aa)). The segment at 19-26 (GHVDHGKT) is G1. 19–26 (GHVDHGKT) is a GTP binding site. Residue Thr-26 participates in Mg(2+) binding. The interval 62–66 (GITIN) is G2. A G3 region spans residues 83-86 (DAPG). Residues 83-87 (DAPGH) and 138-141 (NKAD) each bind GTP. A G4 region spans residues 138-141 (NKAD). Positions 175-177 (SAL) are G5.

The protein belongs to the TRAFAC class translation factor GTPase superfamily. Classic translation factor GTPase family. EF-Tu/EF-1A subfamily. Monomer.

The protein resides in the cytoplasm. It carries out the reaction GTP + H2O = GDP + phosphate + H(+). GTP hydrolase that promotes the GTP-dependent binding of aminoacyl-tRNA to the A-site of ribosomes during protein biosynthesis. The sequence is that of Elongation factor Tu from Mycolicibacterium gilvum (strain PYR-GCK) (Mycobacterium gilvum (strain PYR-GCK)).